The sequence spans 792 residues: MKLSEQWLREWVNPPVDTEKLTAQLTMAGLEVDSVKPAARTLEKVVVGEVIAREKHPDADRLSVCRVDVGEDEPLEIVCGAPNVRTGLKVAVVLVGGVVGDLKVKKTKLRGVVSNGMICSEREMGLSEQHEGIMELPADAPIGKNIQEYLTLDDYILDIELTPNRGDCASVRGIAREVGAINRLPIKGPNLVTVSATINDVFPVEVKAEKACPRYIGRVIRGVDSHSQTPLWICERLRRSGLRTIHPVVDVMNYVMLELGQPLHAFDLSRLVEGIEVRFAKADEKITLIDETEIALTERMLVIADKSRPQALAGIMGGANSAVNEKTEAIFLESAYFSPGEIALTARHYDMQTDSSYRFERGVDFKLQTLAMERATELLIQITGGSPGPLIEVCSETHLPKIPRIILRPERIKRLLGIEINEDEVSKLLELLGMRVVKEKNNWVVTVPSHRFDIKEEADLIEELAHLYGYDRIPQLRMEGEYTIAPFSETQLSSARLRCLMTDRGYHEAVTYSFVNDELQTLLNPEVTSIALSNPLTAEMNVMRTSLWPGLIQVLKYNQARQTHRIRLFEIGMCFNAAGNEWQQVTKLGGLVAGDAHSLQWAEKGRRVDFYDVKGDLSALFTLTRTEAHFRFAEGHHPALHPGQSAALYYKDQCIGYLGALHPELVDQLELTAAPFLFEMELNAIKTSILPKYHPLSKFPSIRRDIAIVVDRDVPVGNIEEEIKSTAGQLLIITQVFDIYESGKHIEFGKKSVALGLTFQDPSRTLIDGEVKQIIERVLAALERKFNAKLRA.

Residues 39–147 (ARTLEKVVVG…ADAPIGKNIQ (109 aa)) form the tRNA-binding domain. The 76-residue stretch at 400-475 (PKIPRIILRP…HLYGYDRIPQ (76 aa)) folds into the B5 domain. Mg(2+) is bound by residues Asp-453, Asp-459, Glu-462, and Glu-463. The 95-residue stretch at 697–791 (SKFPSIRRDI…LERKFNAKLR (95 aa)) folds into the FDX-ACB domain.

Belongs to the phenylalanyl-tRNA synthetase beta subunit family. Type 1 subfamily. In terms of assembly, tetramer of two alpha and two beta subunits. Mg(2+) is required as a cofactor.

It is found in the cytoplasm. It carries out the reaction tRNA(Phe) + L-phenylalanine + ATP = L-phenylalanyl-tRNA(Phe) + AMP + diphosphate + H(+). The protein is Phenylalanine--tRNA ligase beta subunit of Coxiella burnetii (strain RSA 493 / Nine Mile phase I).